Consider the following 636-residue polypeptide: p-hydroxybenzoate-m-hydroxylase A (636 aa).

FAD-binding positions include 10 to 39, 241 to 243, Tyr-289, and Asp-310; these read DIVIVGAGPVGIVLSLCMSRWGYKVKHIDN and RLY. A helical transmembrane segment spans residues 11–28; the sequence is IVIVGAGPVGIVLSLCMS.

The protein belongs to the PheA/TfdB FAD monooxygenase family. The cofactor is FAD.

The protein localises to the membrane. It carries out the reaction 4-hydroxybenzoate + NADH + O2 + H(+) = 3,4-dihydroxybenzoate + NAD(+) + H2O. The enzyme catalyses 4-hydroxybenzoate + NADPH + O2 + H(+) = 3,4-dihydroxybenzoate + NADP(+) + H2O. In terms of biological role, FAD-dependent monooxygenase; part of the benzoic acid degradation pathway also known as the protocatechuic acid pathway. Benzoic acid debradation begins with the conversion of benzoic acid into 4-hydroxybenzoic acid through hydroxylation by the benzoate-4-monooxygenase bphA, and its partner NADPH-cytochrome P450 reductase cprA which act as a mediator in electron donation from NADPH. 4-Hydroxybenzoic acid is then converted into 3,4-dihydroxybenzoic acid (also called protocatechuic acid) by the p-hydroxybenzoate-m-hydroxylase phhA. Protocatechuic acid is converted into 3-carboxy-cis,cis-muconic acid by the intradiol ring-cleavage dioxygenase prcA, which is further metabolized through the 3-oxoadipate pathway to finally enter the tricarboxylic acid cycle (TCA). The sequence is that of p-hydroxybenzoate-m-hydroxylase A from Aspergillus niger (strain ATCC MYA-4892 / CBS 513.88 / FGSC A1513).